Reading from the N-terminus, the 927-residue chain is Protein translocase subunit SecA (927 aa).

Residues Gln-86, 104-108, and Asp-494 contribute to the ATP site; that span reads GEGKT. The tract at residues 853–927 is disordered; the sequence is YTAPDEDGTP…GSKAKRGKRR (75 aa). Over residues 860-879 the composition is skewed to basic and acidic residues; it reads GTPHAEVEAVDPGARERTSE. The segment covering 907–927 has biased composition (basic residues); it reads RAKRRGASARSGSKAKRGKRR.

This sequence belongs to the SecA family. In terms of assembly, monomer and homodimer. Part of the essential Sec protein translocation apparatus which comprises SecA, SecYEG and auxiliary proteins SecDF. Other proteins may also be involved.

It is found in the cell membrane. It localises to the cytoplasm. The enzyme catalyses ATP + H2O + cellular proteinSide 1 = ADP + phosphate + cellular proteinSide 2.. In terms of biological role, part of the Sec protein translocase complex. Interacts with the SecYEG preprotein conducting channel. Has a central role in coupling the hydrolysis of ATP to the transfer of proteins into and across the cell membrane, serving as an ATP-driven molecular motor driving the stepwise translocation of polypeptide chains across the membrane. In Kocuria rhizophila (strain ATCC 9341 / DSM 348 / NBRC 103217 / DC2201), this protein is Protein translocase subunit SecA.